We begin with the raw amino-acid sequence, 29 residues long: Trypsin inhibitor 5 (29 aa).

3 disulfides stabilise this stretch: C3–C20, C10–C22, and C16–C28.

The protein belongs to the protease inhibitor I7 (squash-type serine protease inhibitor) family.

It localises to the secreted. Functionally, strongly inhibits trypsin, weakly inhibits chymotrypsin. In Cyclanthera pedata (Achocha), this protein is Trypsin inhibitor 5.